Reading from the N-terminus, the 190-residue chain is MSKDYFLSSLIKCIRKLYDKKIIAYPTEAMFGLGCDPTSEKAVKRLLDLKKRSIKKGLILVASNYNQIKMYINESKLSAQQKKTMFFHWPGPYTFLVPANSLVPCWLTGQFDTIAVRISAHFSIIKLCNVFGKALVSTSANISNMSPCLTREDVLKDFGKDFPVLYGHIGNESHPSKIINIVNGKLIRYV.

The region spanning 7 to 190 is the YrdC-like domain; the sequence is LSSLIKCIRK…IVNGKLIRYV (184 aa).

Belongs to the SUA5 family. TsaC subfamily.

Its subcellular location is the cytoplasm. The enzyme catalyses L-threonine + hydrogencarbonate + ATP = L-threonylcarbamoyladenylate + diphosphate + H2O. Functionally, required for the formation of a threonylcarbamoyl group on adenosine at position 37 (t(6)A37) in tRNAs that read codons beginning with adenine. Catalyzes the conversion of L-threonine, HCO(3)(-)/CO(2) and ATP to give threonylcarbamoyl-AMP (TC-AMP) as the acyladenylate intermediate, with the release of diphosphate. This Buchnera aphidicola subsp. Schizaphis graminum (strain Sg) protein is Threonylcarbamoyl-AMP synthase.